The chain runs to 332 residues: 5-dehydro-2-deoxygluconokinase 2 (332 aa).

The protein belongs to the carbohydrate kinase PfkB family.

The enzyme catalyses 5-dehydro-2-deoxy-D-gluconate + ATP = 6-phospho-5-dehydro-2-deoxy-D-gluconate + ADP + H(+). The protein operates within polyol metabolism; myo-inositol degradation into acetyl-CoA; acetyl-CoA from myo-inositol: step 5/7. Functionally, catalyzes the phosphorylation of 5-dehydro-2-deoxy-D-gluconate (2-deoxy-5-keto-D-gluconate or DKG) to 6-phospho-5-dehydro-2-deoxy-D-gluconate (DKGP). The polypeptide is 5-dehydro-2-deoxygluconokinase 2 (Bacillus cereus (strain ZK / E33L)).